Reading from the N-terminus, the 219-residue chain is Proteasome subunit beta type-9 (219 aa).

The propeptide at 1 to 20 (MLRAGAPTAGSFRTEEVHTG) is removed in mature form. Thr21 functions as the Nucleophile in the catalytic mechanism. An N6-acetyllysine mark is found at Lys53 and Lys109.

This sequence belongs to the peptidase T1B family. The 26S proteasome consists of a 20S proteasome core and two 19S regulatory subunits. The 20S proteasome core is composed of 28 subunits that are arranged in four stacked rings, resulting in a barrel-shaped structure. The two end rings are each formed by seven alpha subunits, and the two central rings are each formed by seven beta subunits. The catalytic chamber with the active sites is on the inside of the barrel. Component of the immunoproteasome, where it displaces the equivalent housekeeping subunit PSMB6. Component of the spermatoproteasome, a form of the proteasome specifically found in testis. Autocleaved. The resulting N-terminal Thr residue of the mature subunit is responsible for the nucleophile proteolytic activity.

The protein localises to the cytoplasm. The protein resides in the nucleus. The enzyme catalyses Cleavage of peptide bonds with very broad specificity.. In terms of biological role, the proteasome is a multicatalytic proteinase complex which is characterized by its ability to cleave peptides with Arg, Phe, Tyr, Leu, and Glu adjacent to the leaving group at neutral or slightly basic pH. The proteasome has an ATP-dependent proteolytic activity. This subunit is involved in antigen processing to generate class I binding peptides. This chain is Proteasome subunit beta type-9 (Psmb9), found in Mus spicilegus (Steppe mouse).